The sequence spans 459 residues: Glycosyl hydrolase family 109 protein (459 aa).

The segment at residues 1 to 31 is a signal peptide (tat-type signal); that stretch reads MHNIHRRHFLKAAGAVTAGLITANITASTHA. Residues 64–65, aspartate 86, 135–138, 155–156, and asparagine 184 contribute to the NAD(+) site; these read ER, WEWH, and EV. Substrate is bound by residues tyrosine 213, arginine 232, 244–247, and tyrosine 326; that span reads YPTH. Residue tyrosine 244 participates in NAD(+) binding.

Belongs to the Gfo/Idh/MocA family. Glycosyl hydrolase 109 subfamily. NAD(+) serves as cofactor. In terms of processing, predicted to be exported by the Tat system. The position of the signal peptide cleavage has not been experimentally proven.

Glycosidase. The protein is Glycosyl hydrolase family 109 protein of Shewanella sp. (strain W3-18-1).